The sequence spans 121 residues: Large ribosomal subunit protein eL18 (121 aa).

Belongs to the eukaryotic ribosomal protein eL18 family.

The protein is Large ribosomal subunit protein eL18 of Methanoregula boonei (strain DSM 21154 / JCM 14090 / 6A8).